Reading from the N-terminus, the 185-residue chain is Testis development-related protein (185 aa).

2 disordered regions span residues 1-29 and 121-156; these read MWKLGRGRVLLDEPPEEEDGLRGGPPPAA and ADPEDTVGGHPSWSGWEDDAKGSTKYTSLASSANSS.

Belongs to the TDRP family. Interacts with PRM2. Expressed in spermatogenic cells, especially in spermatocytes (at protein level).

Its subcellular location is the nucleus. The protein localises to the cytoplasm. Contributes to normal sperm motility, but not essential for male fertility. This is Testis development-related protein (TDRP) from Homo sapiens (Human).